Here is a 693-residue protein sequence, read N- to C-terminus: MSRKVAIPQQRNIGIMAHIDAGKTTTTERILFYTGVSHKIGETHEGQATMDWMEQEQERGITITSAATTCFWKDCRINIIDTPGHVDFTIEVERALRVLDGAVAVFDAVAGVEPQSETVWRQADRYKVPRICFVNKMDRMGANFFRCVDMIRDRLKAKPLALQVPIGSEDEFQGIVDLVTGKAVVFDKASKGAEFAVTGVPAELQDQFDVMRLELIEAVAEEDDALMEKYLGGEELTEEEIHSAIRRATIARTAVPVLCGSAFRNMGVQPLLDAVVEYLPSPVDIEQMVGANPDNEEEKIVCPCKDEEPLAALVFKLASDPYIGHLSFIRIYSGFIEAGMTVYNANTGKKERIGRLLKMHANKREEIKWAGAGDIVAAVGLKQVSTGDTICEINRPVVLESLDIPEPVIEVAIEPKTKADRDALSAALAKLAKEDPSFRVKGDDETNQTLIAGMGELHLDIIVDRLTREFSVNANVGKPQVAYRETISKETKVDHKYAKQSGGRGQYGHVVIEVEPNPEKGYLFENKITGGVIPKEYIPAVDKGIQDALKSGVLAGYPMVDVKVALVFGSYHEVDSSEQAFYVAGSMAVKEAARKASPVLLEPVMDVEVVTPEEYLGDVMGDLNGRRGKIQSMDSRAGAQVIRCHVPLSEMFGYATDLRSRTQGRANFTMQFDHYERVPANLAEELTKSKSGE.

The region spanning 8 to 283 (PQQRNIGIMA…AVVEYLPSPV (276 aa)) is the tr-type G domain. GTP contacts are provided by residues 17–24 (AHIDAGKT), 81–85 (DTPGH), and 135–138 (NKMD).

The protein belongs to the TRAFAC class translation factor GTPase superfamily. Classic translation factor GTPase family. EF-G/EF-2 subfamily.

It localises to the cytoplasm. In terms of biological role, catalyzes the GTP-dependent ribosomal translocation step during translation elongation. During this step, the ribosome changes from the pre-translocational (PRE) to the post-translocational (POST) state as the newly formed A-site-bound peptidyl-tRNA and P-site-bound deacylated tRNA move to the P and E sites, respectively. Catalyzes the coordinated movement of the two tRNA molecules, the mRNA and conformational changes in the ribosome. This Oleidesulfovibrio alaskensis (strain ATCC BAA-1058 / DSM 17464 / G20) (Desulfovibrio alaskensis) protein is Elongation factor G.